Consider the following 1370-residue polypeptide: MPYSYTEKKRIRKSFAKREDVQDVPFLLATQLQSYLTFLQADTPPSDRASEGLQAAFSSIFPIVSHNGMARLEFVSYVLGEPVFDVKECQQRGLTYASPLRAKVRLVLLDREVSKPTIKEVKEQEVYMGEIPLMTGTGSFVINGTERVIVSQLHRSPGVFFEHDRGKTHSSGKLLFSARVIPYRGSWLDFEFDPKDVLFFRVDRRRKMPVTILLKAIGMTPESILAHFFDFDNFELKSEGGMIEFVPERWKGEMARFDITGRDGNVIVEKDKRINAKHLRDMANANIQRVSVPEEFLYGRVLAKNIVDPDTGEVVAHANDEITESVLSALRAANVRDIQTLYTNDLDRGPYISQTLRTDETADQMAARVAIYRMMRPGEPPTEDAVEALFQRLFYSEETYDLSRVGRMKVNSRLGRGEDITGPMTLTNEDILETIKVLVELRNGRGQIDDIDHLGNRRVRCVGELAENQFRAGLVRVERAVKERLGQAETENLMPHDLINSKPISAAIKEFFGSSQLSQFMDQTNPLSEITHKRRVSALGPGGLTRERAGFEVRDVHPTHYGRVCPIETPEGPNIGLINSMALYARLNEYGFLETPYRKIIDGKVSDQIDYLSAIEESNYVIAQANAALDDEGRFVDDLVACREAGETMLTAPANVHYMDVAPSQIVSVAASLIPFLEHDDANRALMGANMQRQAVPCLRPEKPVVGTGVERTVAVDSGTTVQALRGGVVDHVDAERVVIRVNDDENVAGEVGVDIYNLIKYTRSNQNTNINQRPIVKRGDKVAKGDVLADGASTDLGELALGQNMLIAFMPWNGYNFEDSILISEKVVADDRYTSIHIEELTVVARDTKLGPEEITRDISNLAETQLNRLDDSGIVYIGAEVTADDVLVGKVTPKGETQLTPEEKLLRAIFGEKASDVKDTSLRVPSGMVGTVIDVQVFTREGIVRDKRAQSIIDDELRRYRQDLNDQLRIVENDQFDRIEKLLIGKTVNGGPRKLAKGATITKAYLADLDRWQWFDIRLADEPHAVVLEQAKESLEQKRHQFDLAFEEKRKKLTQGDELPPGVLKMIKVYLAVKRRLQPGDKMAGRHGNKGVVSRITPVEDMPHMADGTPADIVLNPLGVPSRMNVGQVLEVHLGWAAKGVGHRIADMLRDERTAQVKNVRAYLDKVYNTTGTGEQIDTLTDDEVMELAQNLKNGVPFATPVFDGATEEEIGKMLELAYPDEVAKRMQLTDSRTQAWLFDGRTGEKFERPVTVGYMHYLKLHHLVDDKMHARSTGPYSLVTQQPLGGKAQFGGQRFGEMEVWALEAYGAAYTLQEMLTVKSDDITGRTKVYENIVKGDHVIDAGMPESFNVLVKEIRSLALDMDLERN.

Belongs to the RNA polymerase beta chain family. In terms of assembly, the RNAP catalytic core consists of 2 alpha, 1 beta, 1 beta' and 1 omega subunit. When a sigma factor is associated with the core the holoenzyme is formed, which can initiate transcription.

The enzyme catalyses RNA(n) + a ribonucleoside 5'-triphosphate = RNA(n+1) + diphosphate. Its function is as follows. DNA-dependent RNA polymerase catalyzes the transcription of DNA into RNA using the four ribonucleoside triphosphates as substrates. This is DNA-directed RNA polymerase subunit beta from Bordetella petrii (strain ATCC BAA-461 / DSM 12804 / CCUG 43448).